We begin with the raw amino-acid sequence, 280 residues long: Thylakoid lumenal protein TL20.3, chloroplastic (280 aa).

A chloroplast-targeting transit peptide spans 1–59; the sequence is MAFSSLSPLPMKSLDISRSSSSVSRSPYHFQRYLLRRLQLSSRSNLEIKDSSNTREGCC. Residues 60-90 constitute a thylakoid transit peptide; sequence SSAESNTWKRILSAAMAAAVIASSSGVPAMA. Pentapeptide repeat domains are found at residues 124–163 and 169–208; these read ENFRRANFTSADMRESDFSGSTFNGAYLEKAVAYKANFSG and TLMDRMVLNEANLTNAVLVRSVLTRSDLGGAKIEGADFSD.

In terms of assembly, interacts with thioredoxin. Interacts in vitro with LTO1.

It localises to the plastid. It is found in the chloroplast thylakoid lumen. In terms of biological role, pentapeptide repeat protein of unknown function. Subject to degradation when reduced. The protein is Thylakoid lumenal protein TL20.3, chloroplastic of Arabidopsis thaliana (Mouse-ear cress).